Consider the following 240-residue polypeptide: Ubiquinone biosynthesis O-methyltransferase (240 aa).

Residues R44, G64, D85, and M129 each contribute to the S-adenosyl-L-methionine site.

This sequence belongs to the methyltransferase superfamily. UbiG/COQ3 family.

The catalysed reaction is a 3-demethylubiquinol + S-adenosyl-L-methionine = a ubiquinol + S-adenosyl-L-homocysteine + H(+). It carries out the reaction a 3-(all-trans-polyprenyl)benzene-1,2-diol + S-adenosyl-L-methionine = a 2-methoxy-6-(all-trans-polyprenyl)phenol + S-adenosyl-L-homocysteine + H(+). Its pathway is cofactor biosynthesis; ubiquinone biosynthesis. Its function is as follows. O-methyltransferase that catalyzes the 2 O-methylation steps in the ubiquinone biosynthetic pathway. In Escherichia fergusonii (strain ATCC 35469 / DSM 13698 / CCUG 18766 / IAM 14443 / JCM 21226 / LMG 7866 / NBRC 102419 / NCTC 12128 / CDC 0568-73), this protein is Ubiquinone biosynthesis O-methyltransferase.